A 438-amino-acid chain; its full sequence is Trigger factor (438 aa).

The PPIase FKBP-type domain occupies Asp-160–Pro-245.

The protein belongs to the FKBP-type PPIase family. Tig subfamily.

It is found in the cytoplasm. It catalyses the reaction [protein]-peptidylproline (omega=180) = [protein]-peptidylproline (omega=0). Involved in protein export. Acts as a chaperone by maintaining the newly synthesized protein in an open conformation. Functions as a peptidyl-prolyl cis-trans isomerase. This chain is Trigger factor, found in Francisella tularensis subsp. mediasiatica (strain FSC147).